The chain runs to 314 residues: Ribosomal RNA small subunit methyltransferase H (314 aa).

S-adenosyl-L-methionine is bound by residues 36-38 (GGH), Asp56, Phe80, Asp102, and Gln109.

Belongs to the methyltransferase superfamily. RsmH family.

The protein localises to the cytoplasm. The enzyme catalyses cytidine(1402) in 16S rRNA + S-adenosyl-L-methionine = N(4)-methylcytidine(1402) in 16S rRNA + S-adenosyl-L-homocysteine + H(+). Functionally, specifically methylates the N4 position of cytidine in position 1402 (C1402) of 16S rRNA. The chain is Ribosomal RNA small subunit methyltransferase H from Citrobacter koseri (strain ATCC BAA-895 / CDC 4225-83 / SGSC4696).